Reading from the N-terminus, the 99-residue chain is Large ribosomal subunit protein eL21 (99 aa).

This sequence belongs to the eukaryotic ribosomal protein eL21 family.

The chain is Large ribosomal subunit protein eL21 from Staphylothermus marinus (strain ATCC 43588 / DSM 3639 / JCM 9404 / F1).